The following is a 187-amino-acid chain: Guanylate kinase (187 aa).

In terms of domain architecture, Guanylate kinase-like spans 5-183 (GRLTVLTGPS…ALKQLETHMQ (179 aa)). ATP is bound at residue 12 to 19 (GPSGVGKG).

It belongs to the guanylate kinase family.

The protein localises to the cytoplasm. The enzyme catalyses GMP + ATP = GDP + ADP. It carries out the reaction dZMP + ATP = dZDP + ADP. The protein operates within purine metabolism. In terms of biological role, essential for recycling GMP and indirectly, cGMP. Functionally, (Microbial infection) Catalyzes the phosphorylation of dZMP to dZDP, when the bacterium is infected by a phage that produces the substrate for the synthesis of dZTP (2- amino-2'-deoxyadenosine 5'-triphosphate), which is then used by the phage as a DNA polymerase substrate. This chain is Guanylate kinase, found in Synechococcus sp. (strain CC9902).